Reading from the N-terminus, the 179-residue chain is Large ribosomal subunit protein uL6 (179 aa).

This sequence belongs to the universal ribosomal protein uL6 family. Part of the 50S ribosomal subunit.

Functionally, this protein binds to the 23S rRNA, and is important in its secondary structure. It is located near the subunit interface in the base of the L7/L12 stalk, and near the tRNA binding site of the peptidyltransferase center. This is Large ribosomal subunit protein uL6 from Herpetosiphon aurantiacus (strain ATCC 23779 / DSM 785 / 114-95).